A 258-amino-acid polypeptide reads, in one-letter code: uncharacterized protein (258 aa).

This is an uncharacterized protein from Escherichia coli O157:H7.